A 156-amino-acid chain; its full sequence is MKALLIAAGVAALSSTAMAAKLDEKVPYPKADAGFTRQVIHLPKQDAEDAFKVEIIAGKTLEADCNQQRLGGELEEHTLEGWGYSYYRLDKVSGPMSTMMACPGQKKEQRFIPVVGEGFLLRYNSKLPIVVYAPKDVEVRYRIWSASEKVEKAVSE.

The signal sequence occupies residues 1 to 19 (MKALLIAAGVAALSSTAMA). Cysteines 65 and 102 form a disulfide.

The protein belongs to the protease inhibitor I11 (ecotin) family. Homodimer.

It is found in the periplasm. Functionally, general inhibitor of family S1 serine proteases. The polypeptide is Ecotin (Pseudomonas aeruginosa (strain LESB58)).